The following is a 315-amino-acid chain: Shiga-like toxin 1 subunit A (315 aa).

The N-terminal stretch at Met1–Ala22 is a signal peptide. The interval Lys23–Arg273 is A1. Glu189 is an active-site residue. A disulfide bridge connects residues Cys264 and Cys283. The A2 stretch occupies residues Met274–Ser315.

This sequence belongs to the ribosome-inactivating protein family. Shiga-like toxin contains a single subunit A and five copies of subunit B.

The protein resides in the secreted. The catalysed reaction is Endohydrolysis of the N-glycosidic bond at one specific adenosine on the 28S rRNA.. The A subunit is responsible for inhibiting protein synthesis through the catalytic inactivation of 60S ribosomal subunits. After endocytosis, the A subunit is cleaved by furin in two fragments, A1 and A2: A1 is the catalytically active fragment, and A2 is essential for holotoxin assembly with the B subunits. This is Shiga-like toxin 1 subunit A (stxA) from Escherichia coli (Bacteriophage H19B).